A 291-amino-acid polypeptide reads, in one-letter code: 4-hydroxy-tetrahydrodipicolinate synthase (291 aa).

Thr-47 contacts pyruvate. Tyr-134 serves as the catalytic Proton donor/acceptor. The active-site Schiff-base intermediate with substrate is the Lys-162. Ile-205 is a pyruvate binding site.

The protein belongs to the DapA family. As to quaternary structure, homotetramer; dimer of dimers.

Its subcellular location is the cytoplasm. The catalysed reaction is L-aspartate 4-semialdehyde + pyruvate = (2S,4S)-4-hydroxy-2,3,4,5-tetrahydrodipicolinate + H2O + H(+). Its pathway is amino-acid biosynthesis; L-lysine biosynthesis via DAP pathway; (S)-tetrahydrodipicolinate from L-aspartate: step 3/4. Its function is as follows. Catalyzes the condensation of (S)-aspartate-beta-semialdehyde [(S)-ASA] and pyruvate to 4-hydroxy-tetrahydrodipicolinate (HTPA). This Methanospirillum hungatei JF-1 (strain ATCC 27890 / DSM 864 / NBRC 100397 / JF-1) protein is 4-hydroxy-tetrahydrodipicolinate synthase.